A 239-amino-acid chain; its full sequence is Protein GrpE (239 aa).

Disordered stretches follow at residues M1–K53 and G210–N239. 2 stretches are compositionally biased toward basic and acidic residues: residues N34 to K53 and S219 to D230.

Belongs to the GrpE family. Homodimer.

Its subcellular location is the cytoplasm. In terms of biological role, participates actively in the response to hyperosmotic and heat shock by preventing the aggregation of stress-denatured proteins, in association with DnaK and GrpE. It is the nucleotide exchange factor for DnaK and may function as a thermosensor. Unfolded proteins bind initially to DnaJ; upon interaction with the DnaJ-bound protein, DnaK hydrolyzes its bound ATP, resulting in the formation of a stable complex. GrpE releases ADP from DnaK; ATP binding to DnaK triggers the release of the substrate protein, thus completing the reaction cycle. Several rounds of ATP-dependent interactions between DnaJ, DnaK and GrpE are required for fully efficient folding. This Prochlorococcus marinus (strain MIT 9515) protein is Protein GrpE.